A 360-amino-acid polypeptide reads, in one-letter code: AA9 family lytic polysaccharide monooxygenase A (360 aa).

Positions 1 to 19 (MKTSFGLLALAAAAKLVNA) are cleaved as a signal peptide. 2 residues coordinate Cu(2+): His20 and His102. Cys62 and Cys183 are oxidised to a cystine. Residue His169 coordinates O2. A Cu(2+)-binding site is contributed by Tyr180. Residues 254-293 (TSAASASSTKAPATTAAPVQTESAKPATSTTQAAAPTTLV) are disordered. Residues 322 to 358 (GVVKMYAQCGGMNYSGSTTCESGLTCKQWNPYYHQCV) form the CBM1 domain. An N-linked (GlcNAc...) asparagine glycan is attached at Asn334.

The protein belongs to the polysaccharide monooxygenase AA9 family. Cu(2+) is required as a cofactor.

Its subcellular location is the secreted. It catalyses the reaction [(1-&gt;4)-beta-D-glucosyl]n+m + reduced acceptor + O2 = 4-dehydro-beta-D-glucosyl-[(1-&gt;4)-beta-D-glucosyl]n-1 + [(1-&gt;4)-beta-D-glucosyl]m + acceptor + H2O.. In terms of biological role, lytic polysaccharide monooxygenase (LPMO) that depolymerizes crystalline and amorphous polysaccharides via the oxidation of scissile alpha- or beta-(1-4)-glycosidic bonds, yielding C4 oxidation products. Catalysis by LPMOs requires the reduction of the active-site copper from Cu(II) to Cu(I) by a reducing agent and H(2)O(2) or O(2) as a cosubstrate. This chain is AA9 family lytic polysaccharide monooxygenase A (eglD), found in Aspergillus terreus (strain NIH 2624 / FGSC A1156).